A 360-amino-acid polypeptide reads, in one-letter code: Phospho-N-acetylmuramoyl-pentapeptide-transferase (360 aa).

10 helical membrane-spanning segments follow: residues 25–45, 74–94, 97–117, 134–154, 168–188, 199–219, 236–256, 263–283, 288–308, and 339–359; these read RAILSVLTALGISLLLGPWVI, MGGALILSAMFISTLLWSDFG, YVWVVLIVTAIFGAVGWVDDY, YFWQSIAGFGAAVFLFCTAQA, VALNMGLFYIIFTYFVIVGTS, GLAIMPSVMVAGALALIAYLA, AGELAVFCCALVGAGLGFLWF, VFMGDVGALALGAALGLVAVI, FVLFIMGGIFVLETVSVILQV, and IVRFWIITLVLVLIGLATLKF.

The protein belongs to the glycosyltransferase 4 family. MraY subfamily. Mg(2+) serves as cofactor.

The protein localises to the cell inner membrane. It carries out the reaction UDP-N-acetyl-alpha-D-muramoyl-L-alanyl-gamma-D-glutamyl-meso-2,6-diaminopimeloyl-D-alanyl-D-alanine + di-trans,octa-cis-undecaprenyl phosphate = di-trans,octa-cis-undecaprenyl diphospho-N-acetyl-alpha-D-muramoyl-L-alanyl-D-glutamyl-meso-2,6-diaminopimeloyl-D-alanyl-D-alanine + UMP. Its pathway is cell wall biogenesis; peptidoglycan biosynthesis. Functionally, catalyzes the initial step of the lipid cycle reactions in the biosynthesis of the cell wall peptidoglycan: transfers peptidoglycan precursor phospho-MurNAc-pentapeptide from UDP-MurNAc-pentapeptide onto the lipid carrier undecaprenyl phosphate, yielding undecaprenyl-pyrophosphoryl-MurNAc-pentapeptide, known as lipid I. This chain is Phospho-N-acetylmuramoyl-pentapeptide-transferase, found in Cellvibrio japonicus (strain Ueda107) (Pseudomonas fluorescens subsp. cellulosa).